Here is a 313-residue protein sequence, read N- to C-terminus: Dihydroorotate dehydrogenase B (NAD(+)), catalytic subunit (313 aa).

FMN contacts are provided by residues Ser21 and 45 to 46 (KA). Substrate-binding positions include Lys45 and 69–73 (NAIGL). Asn99 and Asn127 together coordinate FMN. A substrate-binding site is contributed by Asn127. The active-site Nucleophile is the Cys130. Ile191 is a binding site for FMN. A substrate-binding site is contributed by 192 to 193 (NT). FMN is bound by residues Gly217, 243–244 (GG), and 265–266 (GT).

It belongs to the dihydroorotate dehydrogenase family. Type 1 subfamily. Heterotetramer of 2 PyrK and 2 PyrD type B subunits. It depends on FMN as a cofactor.

It is found in the cytoplasm. It carries out the reaction (S)-dihydroorotate + NAD(+) = orotate + NADH + H(+). It participates in pyrimidine metabolism; UMP biosynthesis via de novo pathway; orotate from (S)-dihydroorotate (NAD(+) route): step 1/1. Its function is as follows. Catalyzes the conversion of dihydroorotate to orotate with NAD(+) as electron acceptor. This chain is Dihydroorotate dehydrogenase B (NAD(+)), catalytic subunit (pyrD), found in Bacillus caldolyticus.